The chain runs to 385 residues: GDSL esterase/lipase 5 (385 aa).

The N-terminal stretch at 1 to 35 (MRESTLMEKVTRRTISSFIFFIVSSTILFLAGKSS) is a signal peptide. An N-linked (GlcNAc...) asparagine glycan is attached at Asn45. Ser55 (nucleophile) is an active-site residue. Residues Asn66, Asn194, Asn211, and Asn289 are each glycosylated (N-linked (GlcNAc...) asparagine). Residues Asp345 and His348 contribute to the active site.

Belongs to the 'GDSL' lipolytic enzyme family.

It is found in the secreted. This Arabidopsis thaliana (Mouse-ear cress) protein is GDSL esterase/lipase 5 (GLIP5).